The chain runs to 721 residues: 1,4-alpha-glucan branching enzyme GlgB (721 aa).

Residue Asp404 is the Nucleophile of the active site. The active-site Proton donor is Glu457.

Belongs to the glycosyl hydrolase 13 family. GlgB subfamily. Monomer.

The catalysed reaction is Transfers a segment of a (1-&gt;4)-alpha-D-glucan chain to a primary hydroxy group in a similar glucan chain.. It functions in the pathway glycan biosynthesis; glycogen biosynthesis. Catalyzes the formation of the alpha-1,6-glucosidic linkages in glycogen by scission of a 1,4-alpha-linked oligosaccharide from growing alpha-1,4-glucan chains and the subsequent attachment of the oligosaccharide to the alpha-1,6 position. This is 1,4-alpha-glucan branching enzyme GlgB from Novosphingobium aromaticivorans (strain ATCC 700278 / DSM 12444 / CCUG 56034 / CIP 105152 / NBRC 16084 / F199).